Here is a 234-residue protein sequence, read N- to C-terminus: Small ribosomal subunit protein eS4 (234 aa).

The S4 RNA-binding domain maps to 39 to 102 (MPLVVVLRDL…NANYRVVIGM (64 aa)).

Belongs to the eukaryotic ribosomal protein eS4 family.

The sequence is that of Small ribosomal subunit protein eS4 from Methanocella arvoryzae (strain DSM 22066 / NBRC 105507 / MRE50).